We begin with the raw amino-acid sequence, 201 residues long: UPF0301 protein ROP_34500 (201 aa).

It belongs to the UPF0301 (AlgH) family.

The sequence is that of UPF0301 protein ROP_34500 from Rhodococcus opacus (strain B4).